A 731-amino-acid polypeptide reads, in one-letter code: 1,4-alpha-glucan branching enzyme GlgB (731 aa).

The active-site Nucleophile is the D411. The active-site Proton donor is E464.

This sequence belongs to the glycosyl hydrolase 13 family. GlgB subfamily. In terms of assembly, monomer.

The enzyme catalyses Transfers a segment of a (1-&gt;4)-alpha-D-glucan chain to a primary hydroxy group in a similar glucan chain.. Its pathway is glycan biosynthesis; glycogen biosynthesis. Its function is as follows. Catalyzes the formation of the alpha-1,6-glucosidic linkages in glycogen by scission of a 1,4-alpha-linked oligosaccharide from growing alpha-1,4-glucan chains and the subsequent attachment of the oligosaccharide to the alpha-1,6 position. This is 1,4-alpha-glucan branching enzyme GlgB from Mycobacterium tuberculosis (strain ATCC 25177 / H37Ra).